Here is a 375-residue protein sequence, read N- to C-terminus: Phytanoyl-CoA hydroxylase-interacting protein-like (375 aa).

A phosphoserine mark is found at S11, S12, and S15. Residue N22 is glycosylated (N-linked (GlcNAc...) asparagine). S24 carries the post-translational modification Phosphoserine. N36 carries an N-linked (GlcNAc...) asparagine glycan. A Fibronectin type-III domain is found at 51–160 (VPHNIKINNI…EIIEFCTADY (110 aa)).

This sequence belongs to the PHYHIP family.

May play a role in the development of the central system. The chain is Phytanoyl-CoA hydroxylase-interacting protein-like (Phyhipl) from Rattus norvegicus (Rat).